The primary structure comprises 636 residues: Threonine--tRNA ligase (636 aa).

The TGS domain maps to 1 to 61 (MLKITLKDGS…NENCEVEILS (61 aa)). The segment at 244–534 (EHRKLGKELD…LIEHYEGKFP (291 aa)) is catalytic. Zn(2+) is bound by residues cysteine 335, histidine 386, and histidine 511.

It belongs to the class-II aminoacyl-tRNA synthetase family. In terms of assembly, homodimer. Zn(2+) is required as a cofactor.

The protein resides in the cytoplasm. The catalysed reaction is tRNA(Thr) + L-threonine + ATP = L-threonyl-tRNA(Thr) + AMP + diphosphate + H(+). Functionally, catalyzes the attachment of threonine to tRNA(Thr) in a two-step reaction: L-threonine is first activated by ATP to form Thr-AMP and then transferred to the acceptor end of tRNA(Thr). Also edits incorrectly charged L-seryl-tRNA(Thr). The polypeptide is Threonine--tRNA ligase (Natranaerobius thermophilus (strain ATCC BAA-1301 / DSM 18059 / JW/NM-WN-LF)).